The following is a 127-amino-acid chain: Ribonuclease P protein component (127 aa).

It belongs to the RnpA family. Consists of a catalytic RNA component (M1 or rnpB) and a protein subunit.

The catalysed reaction is Endonucleolytic cleavage of RNA, removing 5'-extranucleotides from tRNA precursor.. In terms of biological role, RNaseP catalyzes the removal of the 5'-leader sequence from pre-tRNA to produce the mature 5'-terminus. It can also cleave other RNA substrates such as 4.5S RNA. The protein component plays an auxiliary but essential role in vivo by binding to the 5'-leader sequence and broadening the substrate specificity of the ribozyme. The sequence is that of Ribonuclease P protein component from Synechococcus sp. (strain RCC307).